Reading from the N-terminus, the 235-residue chain is Acyl-protein thioesterase 1 (235 aa).

Residues Ser-125, Asp-181, and His-213 each act as charge relay system in the active site.

It belongs to the AB hydrolase superfamily. AB hydrolase 2 family.

It is found in the cytoplasm. Its subcellular location is the nucleus. It carries out the reaction S-hexadecanoyl-L-cysteinyl-[protein] + H2O = L-cysteinyl-[protein] + hexadecanoate + H(+). Its function is as follows. Hydrolyzes fatty acids from S-acylated cysteine residues in proteins with a strong preference for palmitoylated G-alpha proteins over other acyl substrates. Mediates the deacylation of G-alpha proteins such as GPA1 in vivo, but has weak or no activity toward palmitoylated Ras proteins. Has weak lysophospholipase activity in vitro; however such activity may not exist in vivo. The protein is Acyl-protein thioesterase 1 of Gibberella zeae (strain ATCC MYA-4620 / CBS 123657 / FGSC 9075 / NRRL 31084 / PH-1) (Wheat head blight fungus).